Consider the following 211-residue polypeptide: MLTIALSKGRILDDTLPLLAEAGIVPTENPDKSRKLIIPTTQDDVRLLIVRATDVPTYVEHGAADLGVAGKDVLMEYGGQGLYEPLDLQIARCKLMTAGVVGAPEPKGRLRVATKFVNVAKRYYAEQGRQVDIIKLYGSMELAPLINLADKIIDVVDTGNTLRANGLEPQDLIATISSRLVVNKASMKMQHARIQSLIDTLRQAVESRHRG.

Belongs to the ATP phosphoribosyltransferase family. Short subfamily. As to quaternary structure, heteromultimer composed of HisG and HisZ subunits.

It localises to the cytoplasm. The enzyme catalyses 1-(5-phospho-beta-D-ribosyl)-ATP + diphosphate = 5-phospho-alpha-D-ribose 1-diphosphate + ATP. It functions in the pathway amino-acid biosynthesis; L-histidine biosynthesis; L-histidine from 5-phospho-alpha-D-ribose 1-diphosphate: step 1/9. Functionally, catalyzes the condensation of ATP and 5-phosphoribose 1-diphosphate to form N'-(5'-phosphoribosyl)-ATP (PR-ATP). Has a crucial role in the pathway because the rate of histidine biosynthesis seems to be controlled primarily by regulation of HisG enzymatic activity. This is ATP phosphoribosyltransferase from Pseudomonas putida (strain W619).